The following is a 121-amino-acid chain: Small ribosomal subunit protein uS13 (121 aa).

Residues 95–121 (GLPVRGQKTKTNARTRKGKRKTVGAKS) are disordered.

This sequence belongs to the universal ribosomal protein uS13 family. As to quaternary structure, part of the 30S ribosomal subunit. Forms a loose heterodimer with protein S19. Forms two bridges to the 50S subunit in the 70S ribosome.

Functionally, located at the top of the head of the 30S subunit, it contacts several helices of the 16S rRNA. In the 70S ribosome it contacts the 23S rRNA (bridge B1a) and protein L5 of the 50S subunit (bridge B1b), connecting the 2 subunits; these bridges are implicated in subunit movement. Contacts the tRNAs in the A and P-sites. The sequence is that of Small ribosomal subunit protein uS13 from Campylobacter jejuni subsp. jejuni serotype O:23/36 (strain 81-176).